The primary structure comprises 331 residues: MYNSTSFTIIKHYYILGIKMPKKCTQVFDEFLQVIHQNIVGEDKAIIDILNTLGVEQANDLISAAFLKHFKFMHLEHWQRYPLNIVSTDIIDEQGENVIHKCVRYDKIDFLKHIPSIGFNLGIPNKDGDTPLHLAYKKLIYAQSYPAFTKAKNTLLNIVNFKNKDEISSQFIGVLINLEYIFKPIIDFNYNVATFNHFMHHKPSAPILSDINTPINNFKPLLPRITLLRDINETSSFRDLAPPGHKRKTNSIEYNNTKKHKTISNDSHHNLYSSIENKRLDNDLNSTSKTTTTTSYNELDKLLIAFSNTNNASINNVLDTDEVALIGNKFI.

The stretch at 94-159 (QGENVIHKCV…KAKNTLLNIV (66 aa)) is one ANK repeat.

The polypeptide is Putative ankyrin repeat protein RBE_0261 (Rickettsia bellii (strain RML369-C)).